Reading from the N-terminus, the 182-residue chain is Large ribosomal subunit protein uL6 (182 aa).

The protein belongs to the universal ribosomal protein uL6 family. Part of the 50S ribosomal subunit.

Functionally, this protein binds to the 23S rRNA, and is important in its secondary structure. It is located near the subunit interface in the base of the L7/L12 stalk, and near the tRNA binding site of the peptidyltransferase center. The polypeptide is Large ribosomal subunit protein uL6 (Methanococcus maripaludis (strain C5 / ATCC BAA-1333)).